Here is a 353-residue protein sequence, read N- to C-terminus: MTINITKTKERPVFPFTAIVGQEEMKLALTLNVIDPKIGGVIIMGDRGTGKSTTIRAITDILPEIPIVENDPFNSHPQDFDLMSDEVRSRIEKGESIPSVMKKVSMIDLPLGATEDRVCGTIDIEKALTEGVKAFEPGLLAKANRGILYVDEVNLLDDHLVDILLDSAASGWNTVEREGISIRHPARFVLVGSGNPEEGELRPQLLDRFGMHSEIRTVRDPELRVKIVEQRSEFDKNPSACLETYKNQQTEFKQRIIQAQKVLPTVELDYDLRIRISKICGELDVDGLRGDIVTNRAAKAHAAFNGKQTVTVDDIKAVITMCLRHRLRKDPLETIDSGSKVQKVFEDIFADLM.

ATP is bound at residue 45-52 (GDRGTGKS).

It belongs to the Mg-chelatase subunits D/I family.

It is found in the plastid. Its subcellular location is the chloroplast. The enzyme catalyses protoporphyrin IX + Mg(2+) + ATP + H2O = Mg-protoporphyrin IX + ADP + phosphate + 3 H(+). The protein operates within porphyrin-containing compound metabolism; chlorophyll biosynthesis. In terms of biological role, involved in chlorophyll biosynthesis; introduces a magnesium ion into protoporphyrin IX to yield Mg-protoporphyrin IX. The sequence is that of Magnesium-chelatase subunit ChlI (chlI) from Guillardia theta (Cryptophyte).